The primary structure comprises 214 residues: Phosphatidylserine decarboxylase proenzyme (214 aa).

S182 serves as the catalytic Schiff-base intermediate with substrate; via pyruvic acid. S182 is subject to Pyruvic acid (Ser); by autocatalysis.

This sequence belongs to the phosphatidylserine decarboxylase family. PSD-A subfamily. In terms of assembly, heterodimer of a large membrane-associated beta subunit and a small pyruvoyl-containing alpha subunit. Requires pyruvate as cofactor. Is synthesized initially as an inactive proenzyme. Formation of the active enzyme involves a self-maturation process in which the active site pyruvoyl group is generated from an internal serine residue via an autocatalytic post-translational modification. Two non-identical subunits are generated from the proenzyme in this reaction, and the pyruvate is formed at the N-terminus of the alpha chain, which is derived from the carboxyl end of the proenzyme. The post-translation cleavage follows an unusual pathway, termed non-hydrolytic serinolysis, in which the side chain hydroxyl group of the serine supplies its oxygen atom to form the C-terminus of the beta chain, while the remainder of the serine residue undergoes an oxidative deamination to produce ammonia and the pyruvoyl prosthetic group on the alpha chain.

It is found in the cell membrane. The enzyme catalyses a 1,2-diacyl-sn-glycero-3-phospho-L-serine + H(+) = a 1,2-diacyl-sn-glycero-3-phosphoethanolamine + CO2. The protein operates within phospholipid metabolism; phosphatidylethanolamine biosynthesis; phosphatidylethanolamine from CDP-diacylglycerol: step 2/2. Its function is as follows. Catalyzes the formation of phosphatidylethanolamine (PtdEtn) from phosphatidylserine (PtdSer). The protein is Phosphatidylserine decarboxylase proenzyme of Burkholderia multivorans (strain ATCC 17616 / 249).